Here is a 428-residue protein sequence, read N- to C-terminus: Serine--tRNA ligase (428 aa).

Residue 235 to 237 coordinates L-serine; sequence TAE. 266 to 268 lines the ATP pocket; that stretch reads RSE. Glu289 serves as a coordination point for L-serine. Residue 353–356 participates in ATP binding; that stretch reads EISS. Ser389 is a binding site for L-serine.

It belongs to the class-II aminoacyl-tRNA synthetase family. Type-1 seryl-tRNA synthetase subfamily. Homodimer. The tRNA molecule binds across the dimer.

It localises to the cytoplasm. The enzyme catalyses tRNA(Ser) + L-serine + ATP = L-seryl-tRNA(Ser) + AMP + diphosphate + H(+). The catalysed reaction is tRNA(Sec) + L-serine + ATP = L-seryl-tRNA(Sec) + AMP + diphosphate + H(+). It participates in aminoacyl-tRNA biosynthesis; selenocysteinyl-tRNA(Sec) biosynthesis; L-seryl-tRNA(Sec) from L-serine and tRNA(Sec): step 1/1. Its function is as follows. Catalyzes the attachment of serine to tRNA(Ser). Is also able to aminoacylate tRNA(Sec) with serine, to form the misacylated tRNA L-seryl-tRNA(Sec), which will be further converted into selenocysteinyl-tRNA(Sec). This chain is Serine--tRNA ligase, found in Shewanella halifaxensis (strain HAW-EB4).